Here is a 275-residue protein sequence, read N- to C-terminus: Activator of basal transcription 1 (275 aa).

N-acetylmethionine is present on M1. 2 stretches are compositionally biased toward acidic residues: residues 1–10 (MEVEGLELDT) and 25–34 (AEEEQEESED). The segment at 1 to 39 (MEVEGLELDTAELGPLEGSHQKLEAEEEQEESEDAAGGS) is disordered. The RRM domain maps to 46–145 (GIVYLGHIPP…RRRSPFRYDL (100 aa)). Residues 164-194 (AFERQVRRQRLRAEVAQAKRETDFYLRSVER) adopt a coiled-coil conformation. The tract at residues 200–275 (AADGDSTRPN…RGNSSPARNS (76 aa)) is disordered. Residues 262-275 (PSESRGNSSPARNS) are compositionally biased toward polar residues.

Belongs to the ESF2/ABP1 family. In terms of assembly, interacts with ESF1/ABTAP. Interacts with IGHMBP2.

The protein localises to the nucleus. It localises to the nucleolus. Functionally, could be a novel TATA-binding protein (TBP) which can function as a basal transcription activator. Can act as a regulator of basal transcription for class II genes. The chain is Activator of basal transcription 1 (ABT1) from Bos taurus (Bovine).